Here is a 223-residue protein sequence, read N- to C-terminus: Ribose-5-phosphate isomerase A (223 aa).

Substrate-binding positions include 26–29, 82–85, and 95–98; these read TGST, DGAD, and KGGG. The active-site Proton acceptor is glutamate 104. Lysine 122 provides a ligand contact to substrate.

This sequence belongs to the ribose 5-phosphate isomerase family. As to quaternary structure, homodimer.

The catalysed reaction is aldehydo-D-ribose 5-phosphate = D-ribulose 5-phosphate. The protein operates within carbohydrate degradation; pentose phosphate pathway; D-ribose 5-phosphate from D-ribulose 5-phosphate (non-oxidative stage): step 1/1. Its function is as follows. Catalyzes the reversible conversion of ribose-5-phosphate to ribulose 5-phosphate. The protein is Ribose-5-phosphate isomerase A of Streptococcus agalactiae serotype III (strain NEM316).